A 328-amino-acid polypeptide reads, in one-letter code: Cytochrome f (328 aa).

An N-terminal signal peptide occupies residues 1-44; the sequence is MRNPDTLGLWTKTMVALRRFTVLAIATVSVFLITDLGLPQAASA. Residues Tyr-45, Cys-66, Cys-69, and His-70 each contribute to the heme site. Residues 296–313 form a helical membrane-spanning segment; the sequence is FLVLFLAGIMLSQILLVL.

This sequence belongs to the cytochrome f family. In terms of assembly, the 4 large subunits of the cytochrome b6-f complex are cytochrome b6, subunit IV (17 kDa polypeptide, PetD), cytochrome f and the Rieske protein, while the 4 small subunits are PetG, PetL, PetM and PetN. The complex functions as a dimer. Heme serves as cofactor.

The protein resides in the cellular thylakoid membrane. Component of the cytochrome b6-f complex, which mediates electron transfer between photosystem II (PSII) and photosystem I (PSI), cyclic electron flow around PSI, and state transitions. This Synechocystis sp. (strain ATCC 27184 / PCC 6803 / Kazusa) protein is Cytochrome f (petA).